Reading from the N-terminus, the 272-residue chain is Undecaprenyl-diphosphatase (272 aa).

The next 8 helical transmembrane spans lie at 1–21, 38–58, 84–104, 112–132, 145–165, 183–203, 219–239, and 250–270; these read MSYL…FLPI, PGAT…VVFF, VRMG…GYLF, FRSL…LGLA, MTYG…VPGV, PVAA…SGLY, QTAV…AGLM, and FVVY…TGAI.

This sequence belongs to the UppP family.

It is found in the cell membrane. The enzyme catalyses di-trans,octa-cis-undecaprenyl diphosphate + H2O = di-trans,octa-cis-undecaprenyl phosphate + phosphate + H(+). Functionally, catalyzes the dephosphorylation of undecaprenyl diphosphate (UPP). Confers resistance to bacitracin. The protein is Undecaprenyl-diphosphatase of Clavibacter michiganensis subsp. michiganensis (strain NCPPB 382).